A 153-amino-acid chain; its full sequence is Transcriptional repressor NrdR (153 aa).

A zinc finger spans residues 3 to 34 (CPSCHHSGTRVLESRPVEEGRSIRRRRECEQC). Positions 49-139 (LIVVKKEGTR…VYRQFKDINV (91 aa)) constitute an ATP-cone domain.

Belongs to the NrdR family. Zn(2+) is required as a cofactor.

Functionally, negatively regulates transcription of bacterial ribonucleotide reductase nrd genes and operons by binding to NrdR-boxes. This Geobacillus kaustophilus (strain HTA426) protein is Transcriptional repressor NrdR.